The chain runs to 176 residues: Ribosome maturation factor RimP (176 aa).

The protein belongs to the RimP family.

Its subcellular location is the cytoplasm. Functionally, required for maturation of 30S ribosomal subunits. This Chlorobium limicola (strain DSM 245 / NBRC 103803 / 6330) protein is Ribosome maturation factor RimP.